The chain runs to 324 residues: UDP-N-acetylenolpyruvoylglucosamine reductase (324 aa).

Residues 39–220 form the FAD-binding PCMH-type domain; the sequence is RTGGLAELFY…RAAMHEVALH (182 aa). The active site involves R185. S234 acts as the Proton donor in catalysis. E304 is a catalytic residue.

This sequence belongs to the MurB family. The cofactor is FAD.

It localises to the cytoplasm. The catalysed reaction is UDP-N-acetyl-alpha-D-muramate + NADP(+) = UDP-N-acetyl-3-O-(1-carboxyvinyl)-alpha-D-glucosamine + NADPH + H(+). It participates in cell wall biogenesis; peptidoglycan biosynthesis. Functionally, cell wall formation. In Bartonella bacilliformis (strain ATCC 35685 / KC583 / Herrer 020/F12,63), this protein is UDP-N-acetylenolpyruvoylglucosamine reductase.